Here is an 88-residue protein sequence, read N- to C-terminus: Small ribosomal subunit protein bS18 (88 aa).

Belongs to the bacterial ribosomal protein bS18 family. As to quaternary structure, part of the 30S ribosomal subunit. Forms a tight heterodimer with protein bS6.

Functionally, binds as a heterodimer with protein bS6 to the central domain of the 16S rRNA, where it helps stabilize the platform of the 30S subunit. The chain is Small ribosomal subunit protein bS18 from Aliarcobacter butzleri (strain RM4018) (Arcobacter butzleri).